A 125-amino-acid chain; its full sequence is Small ribosomal subunit protein uS12 (125 aa).

Asp-89 carries the post-translational modification 3-methylthioaspartic acid.

The protein belongs to the universal ribosomal protein uS12 family. Part of the 30S ribosomal subunit. Contacts proteins S8 and S17. May interact with IF1 in the 30S initiation complex.

Functionally, with S4 and S5 plays an important role in translational accuracy. Interacts with and stabilizes bases of the 16S rRNA that are involved in tRNA selection in the A site and with the mRNA backbone. Located at the interface of the 30S and 50S subunits, it traverses the body of the 30S subunit contacting proteins on the other side and probably holding the rRNA structure together. The combined cluster of proteins S8, S12 and S17 appears to hold together the shoulder and platform of the 30S subunit. The protein is Small ribosomal subunit protein uS12 of Cupriavidus pinatubonensis (strain JMP 134 / LMG 1197) (Cupriavidus necator (strain JMP 134)).